The following is an 822-amino-acid chain: Sushi domain-containing protein 2 (822 aa).

Positions 1–27 (MKPALLPWALLLLATALGPGPGPTADA) are cleaved as a signal peptide. One can recognise an SMB domain in the interval 28-66 (QESCSMRCGALDGPCSCHPTCSGLGTCCLDFRDFCLEIL). Residues 28 to 785 (QESCSMRCGA…PKCQPGRSYA (758 aa)) lie on the Extracellular side of the membrane. Cystine bridges form between C31–C35, C31–C44, C35–C62, C42–C44, C42–C55, C48–C54, and C55–C62. N-linked (GlcNAc...) asparagine glycosylation is found at N162 and N177. The AMOP domain occupies 285 to 433 (PVAWARTQCQ…PDCPRYMQRR (149 aa)). The region spanning 445 to 639 (RLASAFGDPH…NWTVHNASSL (195 aa)) is the VWFD domain. N522 carries an N-linked (GlcNAc...) asparagine glycan. In terms of domain architecture, Sushi spans 723 to 780 (VSCGWLAPPPNGQKEGNRYLAGSTIYFHCDNGYSLAGAETSTCQADGTWSSPTPKCQP). 2 disulfide bridges follow: C725/C765 and C751/C778. A helical membrane pass occupies residues 786-806 (VLLGIIFGGLAVVAAVALVYV). The Cytoplasmic portion of the chain corresponds to 807 to 822 (LLRRRKGNTHVWGAQP).

In terms of assembly, interacts with LGALS1; leads to an increased amount of LGALS1 on the cell surface. Interacts with GPR15LG; the interaction is direct. Highly expressed in breast cancer, but shows a restricted expression pattern in normal tissues such as adipose, adrenal gland, kidney, lung, mammary gland, placenta, thyroid, trachea, and uterus. Also expressed in colon; down-regulated in colon cancer tissues.

It is found in the cell membrane. May be a cytokine receptor for GPR15LG. May be a tumor suppressor; together with GPR15LG has a growth inhibitory effect on colon cancer cells which includes G1 cell cycle arrest. May play a role in breast tumorigenesis. The protein is Sushi domain-containing protein 2 (SUSD2) of Homo sapiens (Human).